The following is a 388-amino-acid chain: MNLHEYQAKQLFAEFGLPVPEGYACDTPQEAFEAAGRITTEKKVVKCQVHAGGRGKAGGVELHDTKDGVKEFAQKWLGKNLVTYQTDANGQPVTKILVEEASNIANELYLGAVVDRATRKIVFMASTEGGVEIEKVAEETPELIHKAAIDPLVGPQAYQGRELAFKLGLEGDQIKQFVKIFMGLGTMFSQYDLALLEINPLVITGEGNLLCLDGKINIDSNALYRQPKLREMHDPSQEDEREAHAAQWELNYVALDGNVGCMVNGAGLAMGTMDIVNLHGGKPANFLDVGGGATKERVAEAFKIILSDDNVKAVLVNIFGGIVRCDMIAEGIIGAVKEVGVTVPVVVRLEGTNADLGREVLANSDVDIIAAESLTDAAQKVVAAAEAK.

The 236-residue stretch at 9–244 (KQLFAEFGLP…PSQEDEREAH (236 aa)) folds into the ATP-grasp domain. ATP contacts are provided by residues Lys46, 53–55 (GRG), Glu99, Ser102, and Glu107. The Mg(2+) site is built by Asn199 and Asp213. Substrate-binding positions include Asn264 and 321–323 (GIV).

Belongs to the succinate/malate CoA ligase beta subunit family. Heterotetramer of two alpha and two beta subunits. Requires Mg(2+) as cofactor.

It carries out the reaction succinate + ATP + CoA = succinyl-CoA + ADP + phosphate. The enzyme catalyses GTP + succinate + CoA = succinyl-CoA + GDP + phosphate. The protein operates within carbohydrate metabolism; tricarboxylic acid cycle; succinate from succinyl-CoA (ligase route): step 1/1. Its function is as follows. Succinyl-CoA synthetase functions in the citric acid cycle (TCA), coupling the hydrolysis of succinyl-CoA to the synthesis of either ATP or GTP and thus represents the only step of substrate-level phosphorylation in the TCA. The beta subunit provides nucleotide specificity of the enzyme and binds the substrate succinate, while the binding sites for coenzyme A and phosphate are found in the alpha subunit. This chain is Succinate--CoA ligase [ADP-forming] subunit beta, found in Vibrio campbellii (strain ATCC BAA-1116).